The following is a 298-amino-acid chain: Leucine-rich repeat-containing protein 38 (298 aa).

The first 31 residues, 1–31 (MSLCVAPRHPTGAAAALGLGSLLVLLGPGRA), serve as a signal peptide directing secretion. 2 disulfides stabilise this stretch: Cys-32/Cys-38 and Cys-36/Cys-46. Residues 32 to 60 (CPAGCACTDPHTVDCRDRGLPSVPDPFPL) enclose the LRRNT domain. Residues 32-251 (CPAGCACTDP…ECKFSLSLTD (220 aa)) lie on the Extracellular side of the membrane. LRR repeat units lie at residues 61-82 (DVRKLLVAGNRIQQIPEDFFIF), 85-106 (DLVYLDFRNNSLRSLEEGTFSG), 109-130 (KLAFLDLSYNNLTQLGAGAFRS), 133-154 (RLVKLSLANNHLAGVHEAAFES), and 157-177 (SLQVLELNDNNLRSLNVAALD). Asn-119 carries N-linked (GlcNAc...) asparagine glycosylation. The LRRCT domain maps to 190–245 (NPWLCDCDFAHLFSWIQENTSKLPKGLDAIQCSLPMEDRRVALRELSEASFSECKF). Disulfide bonds link Cys-194/Cys-221 and Cys-196/Cys-243. The helical transmembrane segment at 252 to 272 (LFIIIFSGVAVSIAAIISSFF) threads the bilayer. The Cytoplasmic portion of the chain corresponds to 273-298 (LATVVQCFQRCAPNKDTEDEDDDEDD).

Interacts with KCNMA1.

It localises to the cell membrane. Functionally, auxiliary protein of the large-conductance, voltage and calcium-activated potassium channel (BK alpha). Modulates gating properties by producing a marked shift in the BK channel's voltage dependence of activation in the hyperpolarizing direction, and in the absence of calcium. The polypeptide is Leucine-rich repeat-containing protein 38 (Lrrc38) (Mus musculus (Mouse)).